Consider the following 383-residue polypeptide: Small ribosomal subunit protein mS31 (383 aa).

The transit peptide at 1 to 21 directs the protein to the mitochondrion; the sequence is MLRSLCSIAVRLGGARQPRLL. The stretch at 158–187 forms a coiled coil; it reads VNEAQIKLQEQRKALLNDVREKVEQEEVEE.

The protein belongs to the mitochondrion-specific ribosomal protein mS31 family. Component of the mitochondrial ribosome small subunit (28S) which comprises a 12S rRNA and about 30 distinct proteins.

It localises to the mitochondrion. In Caenorhabditis elegans, this protein is Small ribosomal subunit protein mS31 (mrps-31).